Here is a 366-residue protein sequence, read N- to C-terminus: DNA replication and repair protein RecF (366 aa).

ATP is bound at residue 30–37 (GRNAQGKT).

The protein belongs to the RecF family.

The protein localises to the cytoplasm. In terms of biological role, the RecF protein is involved in DNA metabolism; it is required for DNA replication and normal SOS inducibility. RecF binds preferentially to single-stranded, linear DNA. It also seems to bind ATP. This chain is DNA replication and repair protein RecF, found in Streptococcus thermophilus (strain ATCC BAA-250 / LMG 18311).